A 432-amino-acid chain; its full sequence is Trigger factor (432 aa).

A PPIase FKBP-type domain is found at 163–248 (GDIAVIDFEG…LKALNKKELP (86 aa)).

It belongs to the FKBP-type PPIase family. Tig subfamily.

The protein resides in the cytoplasm. It catalyses the reaction [protein]-peptidylproline (omega=180) = [protein]-peptidylproline (omega=0). Functionally, involved in protein export. Acts as a chaperone by maintaining the newly synthesized protein in an open conformation. Functions as a peptidyl-prolyl cis-trans isomerase. The polypeptide is Trigger factor (Caldanaerobacter subterraneus subsp. tengcongensis (strain DSM 15242 / JCM 11007 / NBRC 100824 / MB4) (Thermoanaerobacter tengcongensis)).